The primary structure comprises 272 residues: Undecaprenyl-diphosphatase (272 aa).

Transmembrane regions (helical) follow at residues 6–26, 45–65, 92–112, 115–135, 189–209, 221–241, and 251–271; these read SLLI…LPVS, AKTF…VMFW, THIL…HDVI, LFYP…LLAA, YAAS…ATVL, ADVP…LIAI, and ISFI…YMVF.

It belongs to the UppP family.

The protein resides in the cell inner membrane. It catalyses the reaction di-trans,octa-cis-undecaprenyl diphosphate + H2O = di-trans,octa-cis-undecaprenyl phosphate + phosphate + H(+). In terms of biological role, catalyzes the dephosphorylation of undecaprenyl diphosphate (UPP). Confers resistance to bacitracin. This is Undecaprenyl-diphosphatase from Pectobacterium atrosepticum (strain SCRI 1043 / ATCC BAA-672) (Erwinia carotovora subsp. atroseptica).